We begin with the raw amino-acid sequence, 86 residues long: CLAVATA3/ESR (CLE)-related protein 8 (86 aa).

An N-terminal signal peptide occupies residues 1 to 24; sequence MKVLKRDSMLLLITLYFLLTTSMA. The segment at 43 to 86 is disordered; sequence DLKQNKAKPHLPNLFRTMRRVPTGPNPLHHISPPQPGSLNYARN. P64 and P67 each carry hydroxyproline. O-linked (Ara...) hydroxyproline glycosylation is present at P67.

It belongs to the CLV3/ESR signal peptide family. In terms of processing, the O-glycosylation (arabinosylation) of the hydroxyproline Pro-67 enhances binding affinity of the CLE8p peptide for its receptor. In terms of tissue distribution, mostly expressed in siliques, and, to a lower extent, in flowers. Expressed in young embryos and endosperm.

Its subcellular location is the secreted. It is found in the extracellular space. In terms of biological role, extracellular signal peptide that regulates cell fate. Represses root apical meristem maintenance. Positively regulates the expression of the transcription factor WOX8 and thus, regulates early embryo development. Regulates the transition of protophloem cells from proliferation to differentiation, thus impinging on postembryonic growth capacity of the root meristem; this signaling pathway requires CRN and CLV2. This is CLAVATA3/ESR (CLE)-related protein 8 from Arabidopsis thaliana (Mouse-ear cress).